A 99-amino-acid polypeptide reads, in one-letter code: Acylphosphatase-1 (99 aa).

The residue at position 2 (alanine 2) is an N-acetylalanine. Positions 9–99 (SVDYEIFGKV…LDYSDFQIVK (91 aa)) constitute an Acylphosphatase-like domain. Active-site residues include arginine 24 and asparagine 42.

Belongs to the acylphosphatase family. As to expression, organ-common type isozyme is found in many different tissues.

It carries out the reaction an acyl phosphate + H2O = a carboxylate + phosphate + H(+). This is Acylphosphatase-1 (ACYP1) from Homo sapiens (Human).